Consider the following 446-residue polypeptide: Trigger factor (446 aa).

The PPIase FKBP-type domain occupies 161 to 246 (GDRLTIDFKG…VSKVERSELP (86 aa)). The interval 422 to 446 (VSYEDAVKPRTAPAEQAEDGEQSAE) is disordered. Over residues 437-446 (QAEDGEQSAE) the composition is skewed to acidic residues.

It belongs to the FKBP-type PPIase family. Tig subfamily.

Its subcellular location is the cytoplasm. It catalyses the reaction [protein]-peptidylproline (omega=180) = [protein]-peptidylproline (omega=0). In terms of biological role, involved in protein export. Acts as a chaperone by maintaining the newly synthesized protein in an open conformation. Functions as a peptidyl-prolyl cis-trans isomerase. This is Trigger factor from Hahella chejuensis (strain KCTC 2396).